We begin with the raw amino-acid sequence, 268 residues long: Aminoglycoside 3'-phosphotransferase (268 aa).

Asp188 serves as the catalytic Proton acceptor.

This sequence belongs to the aminoglycoside phosphotransferase family.

It carries out the reaction kanamycin A + ATP = kanamycin 3'-phosphate + ADP + H(+). Its function is as follows. Resistance to kanamycin and structurally-related aminoglycosides, including amikacin. In Streptomyces fradiae (Streptomyces roseoflavus), this protein is Aminoglycoside 3'-phosphotransferase (aph).